The following is a 142-amino-acid chain: Multiprotein-bridging factor 1b (142 aa).

Positions asparagine 49–serine 75 are disordered. A compositionally biased stretch (polar residues) spans alanine 50–threonine 64. Residues lysine 65 to serine 75 are compositionally biased toward basic and acidic residues. The region spanning isoleucine 87–lysine 141 is the HTH cro/C1-type domain. A DNA-binding region (H-T-H motif) is located at residues glutamine 98–serine 117.

Belongs to the MBF1 family. As to expression, expressed in leaves, roots, stems, petioles and shoots. Higher expression in flowers and siliques. Detected in leaf veins through development.

It is found in the nucleus. It localises to the nucleolus. In terms of biological role, transcriptional coactivator that stimulates transcriptional activity by bridging regulatory proteins and TBP, thereby recruiting TBP to promoters occupied by DNA-binding regulators. The protein is Multiprotein-bridging factor 1b (MBF1B) of Arabidopsis thaliana (Mouse-ear cress).